Reading from the N-terminus, the 264-residue chain is uncharacterized protein (264 aa).

Position 13–20 (13–20) interacts with NADP(+); it reads TGSTSGIG. Ser-141 lines the substrate pocket. Residue Tyr-154 is the Proton acceptor of the active site.

The protein belongs to the short-chain dehydrogenases/reductases (SDR) family.

This is an uncharacterized protein from Bacillus subtilis (strain 168).